Consider the following 406-residue polypeptide: Succinylornithine transaminase (406 aa).

An N6-(pyridoxal phosphate)lysine modification is found at K252.

This sequence belongs to the class-III pyridoxal-phosphate-dependent aminotransferase family. AstC subfamily. Requires pyridoxal 5'-phosphate as cofactor.

The catalysed reaction is N(2)-succinyl-L-ornithine + 2-oxoglutarate = N-succinyl-L-glutamate 5-semialdehyde + L-glutamate. The protein operates within amino-acid degradation; L-arginine degradation via AST pathway; L-glutamate and succinate from L-arginine: step 3/5. Functionally, catalyzes the transamination of N(2)-succinylornithine and alpha-ketoglutarate into N(2)-succinylglutamate semialdehyde and glutamate. Can also act as an acetylornithine aminotransferase. The chain is Succinylornithine transaminase from Escherichia coli (strain SMS-3-5 / SECEC).